An 86-amino-acid chain; its full sequence is Small ribosomal subunit protein bS20 (86 aa).

This sequence belongs to the bacterial ribosomal protein bS20 family.

Functionally, binds directly to 16S ribosomal RNA. The protein is Small ribosomal subunit protein bS20 of Bifidobacterium longum (strain DJO10A).